Here is a 288-residue protein sequence, read N- to C-terminus: MPMIHHHISDLRAALQPYRAAPRIALVPTMGNLHEGHLELVNIAKQHADIVVVSIFVNPTQFGVGEDFDSYPRTLDEDVAKLATVGADYVFAPSIDEMYPVLPPPTTILAGTITEQLCGKTRPTHFDGVGIVVSKLFNIVQPNVAVFGQKDYQQLAIIKQLVRDLSYSIEIIGAPIVRAADGLALSSRNQYLSESERQIAPILQQELQYLAKQITDKQQPLDVLLTAARERITSAGFIIDYLEIKTAELTAVDDDSVNEHQELVVLVAAGLGRARLLDNQLVTINKSL.

Position 30–37 (30–37 (MGNLHEGH)) interacts with ATP. His37 (proton donor) is an active-site residue. Gln61 serves as a coordination point for (R)-pantoate. Residue Gln61 coordinates beta-alanine. An ATP-binding site is contributed by 148–151 (GQKD). (R)-pantoate is bound at residue Gln154. ATP is bound by residues Val177 and 185 to 188 (LSSR).

The protein belongs to the pantothenate synthetase family. As to quaternary structure, homodimer.

It is found in the cytoplasm. The enzyme catalyses (R)-pantoate + beta-alanine + ATP = (R)-pantothenate + AMP + diphosphate + H(+). The protein operates within cofactor biosynthesis; (R)-pantothenate biosynthesis; (R)-pantothenate from (R)-pantoate and beta-alanine: step 1/1. Catalyzes the condensation of pantoate with beta-alanine in an ATP-dependent reaction via a pantoyl-adenylate intermediate. This Psychrobacter arcticus (strain DSM 17307 / VKM B-2377 / 273-4) protein is Pantothenate synthetase.